The following is a 200-amino-acid chain: Mediator of RNA polymerase II transcription subunit 22 (200 aa).

Residues 93–122 (SVNEAIDQRNQQLRALQEECDRKLITLRDE) adopt a coiled-coil conformation. Residues 169–200 (PLLASPETGAGPLQSAAPVHSHGGGPGPTEHT) are disordered. A compositionally biased stretch (gly residues) spans 190 to 200 (HGGGPGPTEHT).

This sequence belongs to the Mediator complex subunit 22 family. As to quaternary structure, component of the Mediator complex, which is composed of MED1, MED4, MED6, MED7, MED8, MED9, MED10, MED11, MED12, MED13, MED13L, MED14, MED15, MED16, MED17, MED18, MED19, MED20, MED21, MED22, MED23, MED24, MED25, MED26, MED27, MED29, MED30, MED31, CCNC, CDK8 and CDC2L6/CDK11. The MED12, MED13, CCNC and CDK8 subunits form a distinct module termed the CDK8 module. Mediator containing the CDK8 module is less active than Mediator lacking this module in supporting transcriptional activation. Individual preparations of the Mediator complex lacking one or more distinct subunits have been variously termed ARC, CRSP, DRIP, PC2, SMCC and TRAP.

The protein resides in the nucleus. In terms of biological role, component of the Mediator complex, a coactivator involved in the regulated transcription of nearly all RNA polymerase II-dependent genes. Mediator functions as a bridge to convey information from gene-specific regulatory proteins to the basal RNA polymerase II transcription machinery. Mediator is recruited to promoters by direct interactions with regulatory proteins and serves as a scaffold for the assembly of a functional preinitiation complex with RNA polymerase II and the general transcription factors. This Mus musculus (Mouse) protein is Mediator of RNA polymerase II transcription subunit 22 (Med22).